The chain runs to 76 residues: DNA-directed RNA polymerase subunit omega (76 aa).

This sequence belongs to the RNA polymerase subunit omega family. The RNAP catalytic core consists of 2 alpha, 1 beta, 1 beta' and 1 omega subunit. When a sigma factor is associated with the core the holoenzyme is formed, which can initiate transcription.

It catalyses the reaction RNA(n) + a ribonucleoside 5'-triphosphate = RNA(n+1) + diphosphate. In terms of biological role, promotes RNA polymerase assembly. Latches the N- and C-terminal regions of the beta' subunit thereby facilitating its interaction with the beta and alpha subunits. This chain is DNA-directed RNA polymerase subunit omega (rpoZ), found in Aquifex aeolicus (strain VF5).